A 471-amino-acid polypeptide reads, in one-letter code: Putative multidrug resistance protein MdtD (471 aa).

The next 13 membrane-spanning stretches (helical) occupy residues 12–32, 49–69, 77–97, 106–126, 138–158, 165–185, 197–217, 225–245, 263–285, 290–312, 342–362, 396–416, and 431–451; these read LWIV…VNTA, MVIV…GWLA, IFFT…QSST, VLQG…VMKI, FVTL…GLLV, WIFL…LWLM, FSGF…LDGY, AGLG…LWHA, FSLG…FMTP, IGLG…GSMG, LLFM…VMLF, MVMQ…LGAF, and IFFW…LVFA.

This sequence belongs to the major facilitator superfamily. TCR/Tet family.

The protein localises to the cell inner membrane. The sequence is that of Putative multidrug resistance protein MdtD from Cronobacter sakazakii (strain ATCC BAA-894) (Enterobacter sakazakii).